The following is a 592-amino-acid chain: Aspartate--tRNA(Asp/Asn) ligase (592 aa).

Glutamate 182 is a binding site for L-aspartate. The interval 206–209 is aspartate; that stretch reads QIFK. Arginine 228 is a binding site for L-aspartate. ATP contacts are provided by residues 228–230 and glutamine 237; that span reads RDE. Histidine 455 is an L-aspartate binding site. Glutamate 489 serves as a coordination point for ATP. Arginine 496 serves as a coordination point for L-aspartate. An ATP-binding site is contributed by 541-544; it reads GLDR.

This sequence belongs to the class-II aminoacyl-tRNA synthetase family. Type 1 subfamily. As to quaternary structure, homodimer.

Its subcellular location is the cytoplasm. It catalyses the reaction tRNA(Asx) + L-aspartate + ATP = L-aspartyl-tRNA(Asx) + AMP + diphosphate. Functionally, aspartyl-tRNA synthetase with relaxed tRNA specificity since it is able to aspartylate not only its cognate tRNA(Asp) but also tRNA(Asn). Reaction proceeds in two steps: L-aspartate is first activated by ATP to form Asp-AMP and then transferred to the acceptor end of tRNA(Asp/Asn). The sequence is that of Aspartate--tRNA(Asp/Asn) ligase from Thermoanaerobacter pseudethanolicus (strain ATCC 33223 / 39E) (Clostridium thermohydrosulfuricum).